A 352-amino-acid polypeptide reads, in one-letter code: Gap junction alpha-4 protein (352 aa).

Over 2 to 23 the chain is Cytoplasmic; sequence GDWEFLEKLLDQVQEHSTSIGK. The helical transmembrane segment at 24–46 threads the bilayer; sequence IWLMVLFIFRILILGLAGESVWG. Topologically, residues 47–76 are extracellular; sequence DEQSDFTCNTEQPGCTNVCYDKAFPISHVR. The helical transmembrane segment at 77 to 99 threads the bilayer; sequence YWVLQFLFVSTPTLFYLGHVIYL. Over 100-153 the chain is Cytoplasmic; sequence SRKEEKLKQKESELRALDDKEQVEQAIAIIEKKKLKLYIQEDGTVKIKGALMYT. A helical transmembrane segment spans residues 154-176; that stretch reads YLTSVIFKSIFEAGFLLGQWYLY. Residues 177–208 lie on the Extracellular side of the membrane; it reads GFVMTPIYVCERVPCPHKVDCFVSRPMEKTIF. Residues 209–231 traverse the membrane as a helical segment; sequence IIFMLVVSLISLFLNVLELIHLI. At 232–352 the chain is on the cytoplasmic side; it reads CKSMIHALKK…SSSASKKQYV (121 aa). A disordered region spans residues 332–352; it reads HSTVEKASTRASSSASKKQYV. A compositionally biased stretch (low complexity) spans 340 to 352; the sequence is TRASSSASKKQYV.

It belongs to the connexin family. Alpha-type (group II) subfamily. In terms of assembly, a connexon is composed of a hexamer of connexins. Expressed in ovarian somatic cells, heart, leg muscle, liver and eye but not in brain.

It is found in the cell membrane. The protein localises to the cell junction. Its subcellular location is the gap junction. Functionally, one gap junction consists of a cluster of closely packed pairs of transmembrane channels, the connexons, through which materials of low MW diffuse from one cell to a neighboring cell. The sequence is that of Gap junction alpha-4 protein (gja4) from Xenopus laevis (African clawed frog).